The sequence spans 121 residues: Protein TusC (121 aa).

It belongs to the DsrF/TusC family. As to quaternary structure, heterohexamer, formed by a dimer of trimers. The hexameric TusBCD complex contains 2 copies each of TusB, TusC and TusD. The TusBCD complex interacts with TusE.

It localises to the cytoplasm. Functionally, part of a sulfur-relay system required for 2-thiolation of 5-methylaminomethyl-2-thiouridine (mnm(5)s(2)U) at tRNA wobble positions. The sequence is that of Protein TusC from Yersinia enterocolitica serotype O:8 / biotype 1B (strain NCTC 13174 / 8081).